Consider the following 1035-residue polypeptide: Integrin alpha-9 (1035 aa).

Positions 1–29 (MGGPAAPRGAGRLRALLLALVVAGIPAGA) are cleaved as a signal peptide. Topologically, residues 30-981 (YNLDPQRPVH…LEPRGYVVGW (952 aa)) are extracellular. 7 FG-GAP repeats span residues 35–96 (QRPV…PDRR), 111–174 (SCGK…AKGR), 182–232 (EYKK…NTYL), 233–289 (KLND…SGTL), 290–349 (IKIF…GALE), 351–408 (QLAL…GIVP), and 411–474 (SMKL…LPGS). 3 disulfides stabilise this stretch: cysteine 87/cysteine 97, cysteine 142/cysteine 162, and cysteine 179/cysteine 194. Asparagine 225 carries an N-linked (GlcNAc...) asparagine glycan. Aspartate 312, asparagine 314, aspartate 316, aspartate 320, aspartate 373, aspartate 375, aspartate 377, aspartate 381, aspartate 435, aspartate 437, asparagine 439, and aspartate 443 together coordinate Ca(2+). An N-linked (GlcNAc...) asparagine glycan is attached at asparagine 476. Residues cysteine 482 and cysteine 491 are joined by a disulfide bond. Asparagine 493 is a glycosylation site (N-linked (GlcNAc...) asparagine). Cysteine 497 and cysteine 555 form a disulfide bridge. Asparagine 612 carries N-linked (GlcNAc...) asparagine glycosylation. Cysteine 620 and cysteine 625 are oxidised to a cystine. 4 N-linked (GlcNAc...) asparagine glycosylation sites follow: asparagine 654, asparagine 658, asparagine 672, and asparagine 676. The cysteines at positions 696 and 706 are disulfide-linked. Asparagine 807 and asparagine 854 each carry an N-linked (GlcNAc...) asparagine glycan. 2 disulfides stabilise this stretch: cysteine 855–cysteine 891 and cysteine 898–cysteine 903. An N-linked (GlcNAc...) asparagine glycan is attached at asparagine 904. The chain crosses the membrane as a helical span at residues 982–1002 (IIAISLLVGILIFLLLAVLLW). The Cytoplasmic portion of the chain corresponds to 1003–1035 (KMGFFRRRYKEIIEAEKNRKENEDSWDWVQKNQ). The GFFKR motif signature appears at 1005-1009 (GFFRR).

It belongs to the integrin alpha chain family. Heterodimer of an alpha and a beta subunit. Alpha-9 (ITGA9) associates with beta-1 (ITGB1). Integrin ITGA9:ITGB1 interacts with FBLN5 (via N-terminus). Integrin ITGA9:ITGB1 interacts with SPP1/OPN (via N-terminus). Integrin ITGA9:ITGB1 interacts with TNC/TNFN3 (via the 3rd Fibronectin type-III domain). Integrin ITGA9:ITGB1 interacts with SVEP1/polydom (via Sushi domain 21); thereby inhibits Ca(2+) intracellular signaling and as a result represses vasocontraction. In terms of tissue distribution, expressed in vascular smooth muscle cells (at protein level). Expressed in the airway epithelium (at protein level).

The protein localises to the membrane. Its function is as follows. Integrin alpha-9/beta-1 (ITGA9:ITGB1) is a receptor for VCAM1, cytotactin and osteopontin. It recognizes the sequence A-E-I-D-G-I-E-L in cytotactin. ITGA9:ITGB1 may play a crucial role in SVEP1/polydom-mediated myoblast cell adhesion. Integrin ITGA9:ITGB1 represses PRKCA-mediated L-type voltage-gated channel Ca(2+) influx and ROCK-mediated calcium sensitivity in vascular smooth muscle cells via its interaction with SVEP1, thereby inhibiting vasocontraction. The polypeptide is Integrin alpha-9 (ITGA9) (Homo sapiens (Human)).